Consider the following 343-residue polypeptide: Twinfilin (343 aa).

ADF-H domains are found at residues 4–139 (QTGI…KHKV) and 177–312 (GINC…EELH). Residues 314–343 (RKLNLRPQFSKPKGPPSRGAKRLTKPQAVE) are disordered.

Belongs to the actin-binding proteins ADF family. Twinfilin subfamily. In terms of assembly, interacts with G-actin; ADP-actin form.

Its subcellular location is the cytoplasm. The protein localises to the cytoskeleton. The protein resides in the cell cortex. Actin-binding protein involved in motile and morphological processes. Inhibits actin polymerization, likely by sequestering G-actin. The polypeptide is Twinfilin (twf) (Anopheles gambiae (African malaria mosquito)).